A 150-amino-acid chain; its full sequence is Troponin C, isoform 2A (150 aa).

Methionine 1 is modified (N-acetylmethionine). 4 consecutive EF-hand domains span residues glutamate 7–lysine 42, isoleucine 43–glutamate 78, alanine 83–arginine 118, and leucine 119–glycine 150. Ca(2+) contacts are provided by aspartate 56, aspartate 58, serine 60, glutamate 62, and glutamate 67. Positions 132, 134, 136, 138, and 143 each coordinate Ca(2+).

This sequence belongs to the troponin C family.

Functionally, troponin is the central regulatory protein of striated muscle contraction. Tn consists of three components: Tn-I which is the inhibitor of actomyosin ATPase, Tn-T which contains the binding site for tropomyosin and Tn-C. The binding of calcium to Tn-C abolishes the inhibitory action of Tn on actin filaments. The sequence is that of Troponin C, isoform 2A from Homarus americanus (American lobster).